Reading from the N-terminus, the 436-residue chain is Origin recognition complex subunit 4 (436 aa).

N6-methyllysine is present on K7. 67–74 (GPRGSGKT) is a binding site for ATP.

Belongs to the ORC4 family. Component of ORC, a complex composed of at least 6 subunits: ORC1, ORC2, ORC3, ORC4, ORC5 and ORC6. ORC is regulated in a cell-cycle dependent manner. It is sequentially assembled at the exit from anaphase of mitosis and disassembled as cells enter S phase. Interacts with DBF4. Interacts with POLQ.

Its subcellular location is the nucleus. Functionally, component of the origin recognition complex (ORC) that binds origins of replication. DNA-binding is ATP-dependent. The specific DNA sequences that define origins of replication have not been identified yet. ORC is required to assemble the pre-replication complex necessary to initiate DNA replication. Binds histone H3 and H4 trimethylation marks H3K9me3, H3K27me3 and H4K20me3. The chain is Origin recognition complex subunit 4 (ORC4) from Homo sapiens (Human).